The following is a 411-amino-acid chain: Putative polysaccharide ligase RC0486 (411 aa).

Helical transmembrane passes span L15 to F35, G78 to I98, L101 to A121, L133 to F153, M166 to L186, I207 to T227, I233 to A253, I328 to Y348, N361 to Y381, and I383 to V403.

Belongs to the O-antigen ligase family.

Its subcellular location is the membrane. The chain is Putative polysaccharide ligase RC0486 from Rickettsia conorii (strain ATCC VR-613 / Malish 7).